The following is a 218-amino-acid chain: Small ribosomal subunit protein uS3 (218 aa).

The 71-residue stretch at 43 to 113 folds into the KH type-2 domain; that stretch reads IREHIERKLA…KVQVNVREVS (71 aa).

The protein belongs to the universal ribosomal protein uS3 family. As to quaternary structure, part of the 30S ribosomal subunit. Forms a tight complex with proteins S10 and S14.

Binds the lower part of the 30S subunit head. Binds mRNA in the 70S ribosome, positioning it for translation. This chain is Small ribosomal subunit protein uS3, found in Rubrobacter xylanophilus (strain DSM 9941 / JCM 11954 / NBRC 16129 / PRD-1).